A 485-amino-acid polypeptide reads, in one-letter code: 3-isopropylmalate dehydratase large subunit (485 aa).

Residues Cys-367, Cys-427, and Cys-430 each coordinate [4Fe-4S] cluster. Residues 439–451 (SPGQRAASTSNRN) show a composition bias toward polar residues. The tract at residues 439–462 (SPGQRAASTSNRNFEGRQGKGGRT) is disordered.

It belongs to the aconitase/IPM isomerase family. LeuC type 1 subfamily. Heterodimer of LeuC and LeuD. It depends on [4Fe-4S] cluster as a cofactor.

It carries out the reaction (2R,3S)-3-isopropylmalate = (2S)-2-isopropylmalate. It participates in amino-acid biosynthesis; L-leucine biosynthesis; L-leucine from 3-methyl-2-oxobutanoate: step 2/4. In terms of biological role, catalyzes the isomerization between 2-isopropylmalate and 3-isopropylmalate, via the formation of 2-isopropylmaleate. The sequence is that of 3-isopropylmalate dehydratase large subunit from Actinoplanes teichomyceticus.